A 538-amino-acid chain; its full sequence is Phosphoenolpyruvate carboxykinase (ATP) (538 aa).

Substrate-binding residues include arginine 64, tyrosine 205, and lysine 211. ATP-binding positions include lysine 211, histidine 230, and 246–254 (GLSGTGKTT). Lysine 211 and histidine 230 together coordinate Mn(2+). Residue aspartate 267 coordinates Mn(2+). ATP is bound by residues glutamate 295, arginine 331, 447 to 448 (RI), and threonine 453. A substrate-binding site is contributed by arginine 331.

Belongs to the phosphoenolpyruvate carboxykinase (ATP) family. As to quaternary structure, monomer. Mn(2+) serves as cofactor.

It is found in the cytoplasm. The catalysed reaction is oxaloacetate + ATP = phosphoenolpyruvate + ADP + CO2. It participates in carbohydrate biosynthesis; gluconeogenesis. Its function is as follows. Involved in the gluconeogenesis. Catalyzes the conversion of oxaloacetate (OAA) to phosphoenolpyruvate (PEP) through direct phosphoryl transfer between the nucleoside triphosphate and OAA. The chain is Phosphoenolpyruvate carboxykinase (ATP) from Histophilus somni (strain 129Pt) (Haemophilus somnus).